Consider the following 772-residue polypeptide: Glucocorticoid receptor (772 aa).

Residues Met1–Val15 are compositionally biased toward basic and acidic residues. Residues Met1–Pro22 are disordered. The interval Met1 to Leu415 is modulating. Omega-N-methylarginine is present on Arg25. A disordered region spans residues Ala39–Arg82. A compositionally biased stretch (low complexity) spans Pro44–Ser58. Phosphoserine is present on residues Ser47, Ser115, Ser136, and Ser143. The interval Asn132–Pro186 is disordered. The segment covering Ser143–Gly156 has biased composition (low complexity). Positions Pro158 to Asn170 are enriched in basic and acidic residues. A phosphoserine mark is found at Ser203, Ser211, and Ser226. A Glycyl lysine isopeptide (Lys-Gly) (interchain with G-Cter in SUMO2) cross-link involves residue Lys258. Glycyl lysine isopeptide (Lys-Gly) (interchain with G-Cter in SUMO); alternate cross-links involve residues Lys277 and Lys293. Glycyl lysine isopeptide (Lys-Gly) (interchain with G-Cter in SUMO2); alternate cross-links involve residues Lys277 and Lys293. Phosphoserine is present on residues Ser307 and Ser400. Residue Lys414 forms a Glycyl lysine isopeptide (Lys-Gly) (interchain with G-Cter in ubiquitin) linkage. 2 consecutive NR C4-type zinc fingers follow at residues Cys416–Cys436 and Cys452–Cys476. The segment at residues Cys416 to Met481 is a DNA-binding region (nuclear receptor). 4 positions are modified to N6-acetyllysine: Lys475, Lys487, Lys489, and Lys490. The interaction with CLOCK stretch occupies residues Gly480 to Lys772. Positions Asn482 to Ala518 are hinge. Residues Gly494–Arg513 are disordered. A compositionally biased stretch (polar residues) spans Ser499–Arg513. Positions Ala519–Thr753 constitute an NR LBD domain. The interval Leu527–Leu692 is interaction with CRY1. Residue Lys698 forms a Glycyl lysine isopeptide (Lys-Gly) (interchain with G-Cter in SUMO) linkage.

It belongs to the nuclear hormone receptor family. NR3 subfamily. In terms of assembly, heteromultimeric cytoplasmic complex with HSP90AA1, HSPA1A/HSPA1B, and FKBP5 or another immunophilin such as PPID, STIP1, or the immunophilin homolog PPP5C. Upon ligand binding FKBP5 dissociates from the complex and FKBP4 takes its place, thereby linking the complex to dynein and mediating transport to the nucleus, where the complex dissociates. Probably forms a complex composed of chaperones HSP90 and HSP70, co-chaperones CDC37, PPP5C, TSC1 and client protein TSC2, CDK4, AKT, RAF1 and NR3C1; this complex does not contain co-chaperones STIP1/HOP and PTGES3/p23. Directly interacts with UNC45A. Binds to DNA as a homodimer, and as heterodimer with NR3C2 or the retinoid X receptor. Binds STAT5A and STAT5B homodimers and heterodimers. Interacts with NRIP1, POU2F1, POU2F2 and TRIM28. Interacts with several coactivator complexes, including the SMARCA4 complex, CREBBP/EP300, TADA2L (Ada complex) and p160 coactivators such as NCOA2 and NCOA6. Interaction with BAG1 inhibits transactivation. Interacts with HEXIM1 and TGFB1I1. Interacts with NCOA1. Interacts with NCOA3, SMARCA4, SMARCC1, SMARCD1, and SMARCE1. Interacts with CLOCK, CRY1 and CRY2 in a ligand-dependent fashion. Interacts with CIART. Interacts with RWDD3. Interacts with UBE2I/UBC9 and this interaction is enhanced in the presence of RWDD3. Interacts with GRIP1. Interacts with NR4A3 (via nuclear receptor DNA-binding domain), represses transcription activity of NR4A3 on the POMC promoter Nur response element (NurRE). Directly interacts with PNRC2 to attract and form a complex with UPF1 and DCP1A; the interaction leads to rapid mRNA degradation. Interacts with GSK3B. Interacts with FNIP1 and FNIP2. Interacts (via C-terminus) with HNRNPU (via C-terminus). Interacts with MCM3AP. Interacts (via domain NR LBD) with HSP90AA1 and HSP90AB1. In the absence of hormonal ligand, interacts with TACC1. Interacts (via NR LBD domain) with ZNF764 (via KRAB domain); the interaction regulates transcription factor activity of NR3C1 by directing its actions toward certain biologic pathways. Post-translationally, acetylation by CLOCK reduces its binding to glucocorticoid response elements and its transcriptional activity. In terms of processing, increased proteasome-mediated degradation in response to glucocorticoids. Phosphorylated in the absence of hormone; becomes hyperphosphorylated in the presence of glucocorticoid. The Ser-203, Ser-226 and Ser-399-phosphorylated forms are mainly cytoplasmic, and the Ser-211-phosphorylated form is nuclear. Phosphorylation at Ser-211 increases transcriptional activity. Phosphorylation at Ser-203, Ser-226 and Ser-399 decreases signaling capacity. Phosphorylation at Ser-399 may protect from glucocorticoid-induced apoptosis. Phosphorylation at Ser-203 and Ser-211 is not required in regulation of chromosome segregation. May be dephosphorylated by PPP5C, attenuates NR3C1 action. Post-translationally, ubiquitinated by UBR5, leading to its degradation: UBR5 specifically recognizes and binds ligand-bound NR3C1 when it is not associated with coactivators (NCOAs). In presence of NCOAs, the UBR5-degron is not accessible, preventing its ubiquitination and degradation. In terms of processing, sumoylation at Lys-277 and Lys-293 negatively regulates its transcriptional activity. Sumoylation at Lys-698 positively regulates its transcriptional activity in the presence of RWDD3. Sumoylation at Lys-277 and Lys-293 is dispensable whereas sumoylation at Lys-698 is critical for the stimulatory effect of RWDD3 on its transcriptional activity. Heat shock increases sumoylation in a RWDD3-dependent manner.

It localises to the cytoplasm. Its subcellular location is the nucleus. The protein resides in the mitochondrion. The protein localises to the cytoskeleton. It is found in the spindle. It localises to the microtubule organizing center. Its subcellular location is the centrosome. The protein resides in the chromosome. The protein localises to the nucleoplasm. Receptor for glucocorticoids (GC). Has a dual mode of action: as a transcription factor that binds to glucocorticoid response elements (GRE), both for nuclear and mitochondrial DNA, and as a modulator of other transcription factors. Affects inflammatory responses, cellular proliferation and differentiation in target tissues. Involved in chromatin remodeling. Plays a role in rapid mRNA degradation by binding to the 5' UTR of target mRNAs and interacting with PNRC2 in a ligand-dependent manner which recruits the RNA helicase UPF1 and the mRNA-decapping enzyme DCP1A, leading to RNA decay. Could act as a coactivator for STAT5-dependent transcription upon growth hormone (GH) stimulation and could reveal an essential role of hepatic GR in the control of body growth. Mediates glucocorticoid-induced apoptosis. Promotes accurate chromosome segregation during mitosis. May act as a tumor suppressor. May play a negative role in adipogenesis through the regulation of lipolytic and antilipogenic gene expression. In Oryctolagus cuniculus (Rabbit), this protein is Glucocorticoid receptor (NR3C1).